Here is a 112-residue protein sequence, read N- to C-terminus: Ribosome-binding factor A (112 aa).

This sequence belongs to the RbfA family. As to quaternary structure, monomer. Binds 30S ribosomal subunits, but not 50S ribosomal subunits or 70S ribosomes.

The protein resides in the cytoplasm. Its function is as follows. One of several proteins that assist in the late maturation steps of the functional core of the 30S ribosomal subunit. Associates with free 30S ribosomal subunits (but not with 30S subunits that are part of 70S ribosomes or polysomes). Required for efficient processing of 16S rRNA. May interact with the 5'-terminal helix region of 16S rRNA. This Mycoplasma genitalium (strain ATCC 33530 / DSM 19775 / NCTC 10195 / G37) (Mycoplasmoides genitalium) protein is Ribosome-binding factor A.